Reading from the N-terminus, the 340-residue chain is Heat-inducible transcription repressor HrcA (340 aa).

It belongs to the HrcA family.

In terms of biological role, negative regulator of class I heat shock genes (grpE-dnaK-dnaJ and groELS operons). Prevents heat-shock induction of these operons. This is Heat-inducible transcription repressor HrcA from Burkholderia ambifaria (strain MC40-6).